The following is a 264-amino-acid chain: Transmembrane protein 41A (264 aa).

An N-terminal signal peptide occupies residues 1–17; it reads MRPLLGLLLVFAGCTFA. Helical transmembrane passes span 67–87, 100–122, 153–173, 175–195, and 219–239; these read AYVF…AIPG, GPWL…CYLL, LFFF…FLNL, APIL…GLIP, and WDTV…GTLI. The VTT domain stretch occupies residues 96–207; it reads GALFGPWLGL…FICVQTGSIL (112 aa). N-linked (GlcNAc...) asparagine glycosylation occurs at N250.

The protein belongs to the TMEM41 family.

The protein localises to the membrane. The polypeptide is Transmembrane protein 41A (TMEM41A) (Homo sapiens (Human)).